Reading from the N-terminus, the 460-residue chain is MDILLNKPITIVGGGLAGSALALLLGQKGFPIQVIEKRPKQSENIRARSINLALSDRGVKTLTKTGYVDDILKIAIPMKGRMIHSLDSVQTFQAYSSDSNKHLYSVSRQLLNDRLREHTEKLENVKFIFSDACKSIDLKQCTIQTQDSNQTIEASTIIGCDGAFSAVRGSMVKLDRQDYSQSYLKHGYKELCIPSGPNQTFQIDKNSLHIWPRGSFMMIALPNIDGSFTCTLFFPFDGPLSFSSLDTREKVDQFFKDYFPDAYKLMPDLLDDYFENPTSSLVTVKTEPYHYQGKVVLVGDAAHAIVPFYGQGMNAAFEDVLELFNCFEDKSLYPSSTDKPFDNDHFNNIYKKYQENRKANSDAIAEMAVENFFEMRDHVGDALFLFKKKVEHLLEVKFPSRYISRYELISFSTQPYAYAQKIGLANQQILNELVKGNDDYNIEKIDLVLADQLIKKYLNK.

Belongs to the aromatic-ring hydroxylase family. KMO subfamily. Requires FAD as cofactor.

Its subcellular location is the mitochondrion. It catalyses the reaction L-kynurenine + NADPH + O2 + H(+) = 3-hydroxy-L-kynurenine + NADP(+) + H2O. It functions in the pathway cofactor biosynthesis; NAD(+) biosynthesis; quinolinate from L-kynurenine: step 1/3. Catalyzes the hydroxylation of L-kynurenine (L-Kyn) to form 3-hydroxy-L-kynurenine (L-3OHKyn). Required for synthesis of quinolinic acid. The polypeptide is Kynurenine 3-monooxygenase (Dictyostelium discoideum (Social amoeba)).